Here is a 775-residue protein sequence, read N- to C-terminus: Venom dipeptidyl peptidase 4 (775 aa).

A signal peptide spans 1–23; sequence MEVLVQLALLLVVHGSLVVLVAG. Asn-68 and Asn-239 each carry an N-linked (GlcNAc...) asparagine glycan. 2 disulfide bridges follow: Cys-450–Cys-453 and Cys-463–Cys-481. 4 N-linked (GlcNAc...) asparagine glycosylation sites follow: Asn-473, Asn-505, Asn-578, and Asn-631. Residue Ser-639 is the Charge relay system of the active site. Cys-659 and Cys-770 form a disulfide bridge. N-linked (GlcNAc...) asparagine glycosylation is found at Asn-689 and Asn-694. Active-site charge relay system residues include Asp-718 and His-750.

It belongs to the peptidase S9B family. DPPIV subfamily. Expressed by the venom duct.

It is found in the secreted. The enzyme catalyses Release of an N-terminal dipeptide, Xaa-Yaa-|-Zaa-, from a polypeptide, preferentially when Yaa is Pro, provided Zaa is neither Pro nor hydroxyproline.. Its activity is regulated as follows. Inhibited by diprotin A. Venom dipeptidyl-peptidase which removes N-terminal dipeptides sequentially from polypeptides having unsubstituted N-termini provided that the penultimate residue is proline. May process promelittin into its active form and/or modulate the chemotactic activity of immune cells after the insect sting. This is Venom dipeptidyl peptidase 4 from Apis mellifera (Honeybee).